A 501-amino-acid polypeptide reads, in one-letter code: Carotenoid cleavage oxygenase (501 aa).

Residues His162, His211, His314, and His494 each contribute to the Fe cation site.

It belongs to the carotenoid oxygenase family. The cofactor is Fe(2+).

Its function is as follows. Catalyzes the oxidative cleavage of several carotenoids and apocarotenoids in vitro. The sequence is that of Carotenoid cleavage oxygenase from Mycobacterium tuberculosis (strain CDC 1551 / Oshkosh).